Here is a 141-residue protein sequence, read N- to C-terminus: Flagellar assembly factor FliW (141 aa).

Belongs to the FliW family. As to quaternary structure, interacts with translational regulator CsrA and flagellin(s).

Its subcellular location is the cytoplasm. Its function is as follows. Acts as an anti-CsrA protein, binds CsrA and prevents it from repressing translation of its target genes, one of which is flagellin. Binds to flagellin and participates in the assembly of the flagellum. This chain is Flagellar assembly factor FliW, found in Clostridium beijerinckii (strain ATCC 51743 / NCIMB 8052) (Clostridium acetobutylicum).